The chain runs to 1010 residues: Signal peptide, CUB and EGF-like domain-containing protein 2 (1010 aa).

An N-terminal signal peptide occupies residues 1–24 (MGAVWTVRLLCLFLLLLNTRQSAA). In terms of domain architecture, EGF-like 1; calcium-binding spans 28 to 68 (NTDQCAEGSDACHIDAICQNTPTSYKCTCKTGFKGDGKHCE). Cystine bridges form between cysteine 32–cysteine 45, cysteine 39–cysteine 54, cysteine 56–cysteine 67, cysteine 73–cysteine 85, cysteine 81–cysteine 94, cysteine 96–cysteine 109, cysteine 115–cysteine 126, and cysteine 122–cysteine 135. The EGF-like 2; calcium-binding domain maps to 69-110 (DIDECDVEYNGGCVHECNNIPGNYRCTCLDGFHLAHDGHNCL). An EGF-like 3; calcium-binding domain is found at 111 to 147 (DVDECVFNNGGCQHVCVNTMGSYECRCKQGFFLSDNQ). EGF-like domains follow at residues 160–196 (CMNK…QRGC) and 200–235 (CNHG…GRTC). Asparagine 249 carries N-linked (GlcNAc...) asparagine glycosylation. The EGF-like 6 domain maps to 269–304 (CAVNNGGCDSTCKDTSTGVRCSCPVGFTLQPDGKSC). Residues 306 to 346 (DIDECELHNGGCDHYCRNTIGSFECSCRKGFKLLTDERSCQ) enclose the EGF-like 7; calcium-binding domain. Intrachain disulfides connect cysteine 310-cysteine 321, cysteine 317-cysteine 330, cysteine 332-cysteine 345, cysteine 351-cysteine 361, cysteine 357-cysteine 370, cysteine 372-cysteine 384, cysteine 390-cysteine 401, cysteine 397-cysteine 410, and cysteine 412-cysteine 425. Positions 347-385 (DIDECFFERTCDHTCVNSPGSFQCVCNKGYTLYGLAHCG) constitute an EGF-like 8; calcium-binding domain. The EGF-like 9; calcium-binding domain maps to 386-426 (DINECSFNNGGCEHTCENTMGSFGCHCRAGYKLHWNKKDCI). Asparagine 488, asparagine 703, asparagine 774, and asparagine 803 each carry an N-linked (GlcNAc...) asparagine glycan. An intrachain disulfide couples cysteine 822 to cysteine 848. A CUB domain is found at 822–934 (CGGELGEFTG…KGFQVPYVTY (113 aa)). Residues 860–869 (ILVVVPEIYL) are interaction with the cholesterol-anchor of SHH. A disulfide bridge links cysteine 875 with cysteine 896. N-linked (GlcNAc...) asparagine glycosylation is present at asparagine 982.

As to quaternary structure, interacts with SHH via the cholesterol anchor of the dually lipid-modified SHH (ShhNp). Interacts with PTCH1. Forms homooligomers and heterooligomers with SCUBE1 and SCUBE3. Interacts with VEGFR2. Post-translationally, N-glycosylated.

The protein localises to the secreted. Its subcellular location is the cell surface. Functionally, lipid-binding protein required for SHH long-range signaling by binding to the dually lipid-modified SHH (ShhNp) and by promoting ShhNp mobilization, solubilization and release from the cell membrane. Acts by enhancing the proteolytic processing (shedding) of the lipid-modified N- and C- terminal of ShhNp at the cell surface. Synergizes with DISP1 to cause an increase in SHH secretion. Probable cell surface coreceptor for VEGFR2 involved in VEGFR2-mediated angiogenesis. The sequence is that of Signal peptide, CUB and EGF-like domain-containing protein 2 (scube2) from Danio rerio (Zebrafish).